A 430-amino-acid chain; its full sequence is Small ribosomal subunit protein uS3m (430 aa).

This sequence belongs to the universal ribosomal protein uS3 family.

The protein localises to the mitochondrion. This chain is Small ribosomal subunit protein uS3m (RPS3), found in Marchantia polymorpha (Common liverwort).